Consider the following 1273-residue polypeptide: Paired amphipathic helix protein Sin3a (1273 aa).

Disordered stretches follow at residues 1 to 23 and 87 to 110; these read MKRRLDDQESPVYAAQQRRIPGS and HPTAVQPHGGQVVQSHAHPAPPVA. The residue at position 10 (serine 10) is a Phosphoserine. The region spanning 119 to 189 is the PAH 1 domain; it reads QRLKVEDALS…MGFNTFLPPG (71 aa). Positions 119 to 196 are interaction with HCFC1; sequence QRLKVEDALS…PPGYKIEVQT (78 aa). Glycyl lysine isopeptide (Lys-Gly) (interchain with G-Cter in SUMO2) cross-links involve residues lysine 122 and lysine 134. Positions 205–297 are disordered; that stretch reads PGQVHQIPTH…ISLGTAPSLQ (93 aa). The segment at 205–480 is interaction with REST; it reads PGQVHQIPTH…RKALRSAEAY (276 aa). The span at 228–237 shows a compositional bias: low complexity; the sequence is SQPSAQSAPA. The segment covering 238-248 has biased composition (pro residues); it reads PAQPAPQPPPA. A compositionally biased stretch (polar residues) spans 252–266; sequence KPSQLQAHTPASQQT. Over residues 267-282 the composition is skewed to pro residues; sequence PPLPPYASPRSPPVQP. Position 277 is a phosphoserine (serine 277). Threonine 284 is subject to Phosphothreonine. Over residues 284–297 the composition is skewed to polar residues; it reads TPVTISLGTAPSLQ. A PAH 2 domain is found at 300-383; sequence QPVEFNHAIN…SEFGQFLPDA (84 aa). Positions 398-446 are disordered; the sequence is DSVRNDHGGTVKKPQLNNKPQRPSQNGCQIRRHPTGTTPPVKKKPKLLN. The segment covering 412 to 425 has biased composition (polar residues); it reads QLNNKPQRPSQNGC. Residues 456 to 525 form the PAH 3 domain; it reads SKHGGGTESL…NWFKNFLGYK (70 aa). The segment at 458 to 525 is interaction with SAP30; that stretch reads HGGGTESLFF…NWFKNFLGYK (68 aa). Lysine 469 is modified (N6-acetyllysine). An interaction with NCOR1 region spans residues 523–850; that stretch reads GYKESVHLET…EMDVDEATGA (328 aa). An interaction with SUDS3 and SAP130 region spans residues 524–659; that stretch reads YKESVHLETY…KFRLDNTLGG (136 aa). Lysine 563 participates in a covalent cross-link: Glycyl lysine isopeptide (Lys-Gly) (interchain with G-Cter in SUMO2). The interaction with HDAC1 and ARID4B stretch occupies residues 687–829; it reads NPSIAVPIVL…IPDLLFAQRG (143 aa). A phosphoserine mark is found at serine 832 and serine 860. N6-acetyllysine occurs at positions 865 and 875. The segment at 888–967 is interaction with OGT; the sequence is VNNNWYIFMR…YYPAFLDMVR (80 aa). A coiled-coil region spans residues 903–932; sequence CLRLLRICSQAERQIEEENREREWEREVLG. A phosphoserine mark is found at serine 940, serine 1089, and serine 1112. Residues 1136–1156 form a disordered region; it reads CQRGREQQEKEGKEGNSKKTM. Over residues 1138 to 1156 the composition is skewed to basic and acidic residues; it reads RGREQQEKEGKEGNSKKTM.

As to quaternary structure, interacts with ARID4B, BRMS1L, HCFC1, HDAC1, HDAC2, MXI1, SAP30L, SAP130, SFPQ and TOPORS. Interacts with OGT (via TPRs 1-6); the interaction mediates transcriptional repression in parallel with histone deacetylase. Interacts with BAZ2A, MXD1, MXD3, MXD4, MBD2, DACH1, NCOR1, NR4A2, REST, RLIM, SAP30, SETDB1, SMYD2, and SUDS3. Interacts with PHF12 in a complex composed of HDAC1, PHF12 and SAP30. Interacts with TET1; the interaction recruits SIN3A to gene promoters. The large PER complex involved in the histone deacetylation is composed of at least HDAC1, PER2, SFPQ and SIN3A. Interacts with KLF11. Interacts with PPHLN1. Found in a complex with YY1, GON4L and HDAC1. Interacts (via PAH2) with FOXK1. Interacts with FOXK2. Found in a complex composed of at least SINHCAF, SIN3A, HDAC1, SAP30, RBBP4, OGT and TET1. Interacts with SINHCAF. Interacts with SPHK2. SUMO1 sumoylated by TOPORS. Probably desumoylated by SENP2. Expressed in the developing brain, with highest levels of expression detected in the ventricular zone of various cortical regions.

Its subcellular location is the nucleus. It localises to the nucleolus. Acts as a transcriptional repressor. Corepressor for REST. Interacts with MXI1 to repress MYC responsive genes and antagonize MYC oncogenic activities. Also interacts with MXD1-MAX heterodimers to repress transcription by tethering SIN3A to DNA. Acts cooperatively with OGT to repress transcription in parallel with histone deacetylation. Involved in the control of the circadian rhythms. Required for the transcriptional repression of circadian target genes, such as PER1, mediated by the large PER complex through histone deacetylation. Cooperates with FOXK1 to regulate cell cycle progression probably by repressing cell cycle inhibitor genes expression. Required for cortical neuron differentiation and callosal axon elongation. This is Paired amphipathic helix protein Sin3a from Homo sapiens (Human).